Consider the following 397-residue polypeptide: Phosphoglycerate kinase (397 aa).

Residues 21-23 (DFN), Arg37, 60-63 (HLGR), Arg120, and Arg153 each bind substrate. ATP is bound by residues Lys206, Gly296, Glu327, and 353 to 356 (GGDS).

The protein belongs to the phosphoglycerate kinase family. As to quaternary structure, monomer.

It is found in the cytoplasm. The catalysed reaction is (2R)-3-phosphoglycerate + ATP = (2R)-3-phospho-glyceroyl phosphate + ADP. It participates in carbohydrate degradation; glycolysis; pyruvate from D-glyceraldehyde 3-phosphate: step 2/5. In Rhodopirellula baltica (strain DSM 10527 / NCIMB 13988 / SH1), this protein is Phosphoglycerate kinase.